Reading from the N-terminus, the 386-residue chain is Patatin-10 (386 aa).

An N-terminal signal peptide occupies residues 1-23 (MATTKSFLILFFMILATTSSTCA). The 198-residue stretch at 32-229 (LSIDGGGIKG…TVGDPALLSL (198 aa)) folds into the PNPLA domain. The GXGXXG motif lies at 36–41 (GGGIKG). The GXSXG motif lies at 75-79 (GTSTG). S77 acts as the Nucleophile in catalysis. A glycan (N-linked (GlcNAc...) asparagine) is linked at N115. D215 (proton acceptor) is an active-site residue. Residues 215–217 (DGG) carry the DGA/G motif. Residues 321–384 (ENALTGTTTE…NRKKLRANKA (64 aa)) adopt a coiled-coil conformation.

The protein belongs to the patatin family. As to expression, tuber.

Its subcellular location is the vacuole. Probable lipolytic acyl hydrolase (LAH), an activity which is thought to be involved in the response of tubers to pathogens. This chain is Patatin-10, found in Solanum tuberosum (Potato).